The primary structure comprises 331 residues: MRPLVLLWGCLVLPGYEALKGPKEISGFEGDTVSLRCTYVEKMKEHRKYWCRQGGILVSRCGDIVYANQDQEVTRGRMSIRDSPQELSMTVIMRDLTLKDSGKYWCGIDRLGRDESFEVTLIVFPGKRDNAVPAGTCCPSSPTPSFQPLTPTRSLQPKAKAWQTQLPEPRSSRPVVWLPLTTPQDSRAVASSVSKPSVSIPMVRMMAPVLILLSLLLAAGLIAFGSHMLRWRKKAWLATETQKNEKVYLETSLPGNGWTTEDSTIDLAVTPECLRNLNPSAVPSPETQNLSQSTEEEEAARSLDDDKEDVMAPPPLQMSAEELAFSEFISV.

Residues 1 to 18 (MRPLVLLWGCLVLPGYEA) form the signal peptide. The Ig-like V-type domain maps to 19 to 120 (LKGPKEISGF…LGRDESFEVT (102 aa)). Residues 19 to 204 (LKGPKEISGF…KPSVSIPMVR (186 aa)) lie on the Extracellular side of the membrane. The cysteines at positions 37 and 106 are disulfide-linked. Residue threonine 136 is glycosylated (O-linked (GalNAc...) threonine). An O-linked (GalNAc...) serine glycan is attached at serine 140. A glycan (O-linked (GalNAc...) threonine) is linked at threonine 143. An O-linked (GalNAc...) serine glycan is attached at serine 145. O-linked (GalNAc...) threonine glycosylation is found at threonine 150 and threonine 152. O-linked (GalNAc...) serine glycosylation is present at serine 154. 3 O-linked (GalNAc...) threonine glycosylation sites follow: threonine 164, threonine 181, and threonine 182. A glycan (O-linked (GalNAc...) serine) is linked at serine 186. A helical membrane pass occupies residues 205 to 225 (MMAPVLILLSLLLAAGLIAFG). Residues 226–331 (SHMLRWRKKA…ELAFSEFISV (106 aa)) lie on the Cytoplasmic side of the membrane. Residues 278 to 293 (NPSAVPSPETQNLSQS) are compositionally biased toward polar residues. The tract at residues 278-318 (NPSAVPSPETQNLSQSTEEEEAARSLDDDKEDVMAPPPLQM) is disordered.

Belongs to the CD300 family. In terms of processing, O-glycosylated with sialylated oligosaccharides. Expressed in monocyte cell lines. Expressed in certain types of endothelial and myeloid lineage cells. Expressed in mesenteric lymph nodes (LNs), spleen, thymus, lung, heart and kidney. Expressed in high endothelial venules (HEVs) in peripheral and mesenteric LNs (at protein level). Highly expressed in heart. Slightly expressed in spleen and thymus. Isoform 5 is expressed preferentially in heart. Isoform 1 is expressed predominantly in kidney and liver.

It localises to the apical cell membrane. It is found in the basolateral cell membrane. Its subcellular location is the endosome. The protein resides in the multivesicular body membrane. Functionally, receptor which may mediate L-selectin-dependent lymphocyte rollings. Binds SELL in a calcium dependent manner. Binds lymphocyte. The chain is CMRF35-like molecule 9 (Cd300lg) from Mus musculus (Mouse).